Consider the following 269-residue polypeptide: HTH-type transcriptional activator ArnR1 (269 aa).

The Cytoplasmic portion of the chain corresponds to 1–217 (MSSMNKRVFD…LLKLTGSYRY (217 aa)). A DNA-binding region (H-T-H motif) is located at residues 42-65 (TTEISQTINTSRKSIIDAIRKLVD). Residues 218 to 238 (EIALTKVMLFNVISIPVLMYL) traverse the membrane as a helical segment. The Extracellular portion of the chain corresponds to 239–241 (KDQ). Residues 242-262 (LGILEAIWLYVIILLPLLSIF) form a helical membrane-spanning segment. Residues 263–269 (AEIFNRI) lie on the Cytoplasmic side of the membrane.

The protein localises to the cell membrane. Functionally, involved in regulation of archaellar gene expression. May activate flaB transcription upon nutrient starvation by acting on the flaB promoter. The chain is HTH-type transcriptional activator ArnR1 from Sulfolobus acidocaldarius (strain ATCC 33909 / DSM 639 / JCM 8929 / NBRC 15157 / NCIMB 11770).